The chain runs to 815 residues: Dual specificity tyrosine-phosphorylation-regulated kinase mbk-2 (815 aa).

4 disordered regions span residues 1 to 49, 67 to 146, 185 to 204, and 298 to 395; these read MAAL…NYTR, PSSF…PLGT, YEFPSGQAQQQRRLGGSQQH, and ALPS…FRPE. 2 stretches are compositionally biased toward polar residues: residues 7 to 25 and 40 to 49; these read FTRNSRSYGQQPIDVTQQG and SKMSNINYTR. Over residues 68–78 the composition is skewed to low complexity; it reads SSFSGASSSSS. Composition is skewed to polar residues over residues 119-140 and 190-204; these read SGNTLTRSYHQPSSTNSSTSNL and GQAQQQRRLGGSQQH. A compositionally biased stretch (low complexity) spans 301-316; that stretch reads SVGTSSSNGSSNSSSG. The segment covering 325 to 351 has biased composition (polar residues); sequence LMTQSIGGPNKHLSASHSTLNTASTHD. At serine 361 the chain carries Phosphoserine; by cdk-1. Over residues 363–391 the composition is skewed to low complexity; sequence SNESLSRSHTSSSGGSQGGHNSNSGSNSG. Residues 460-773 form the Protein kinase domain; the sequence is YEVLKVIGKG…PAQALKHKWL (314 aa). ATP contacts are provided by residues 466–474 and lysine 489; that span reads IGKGSFGQV. Aspartate 586 functions as the Proton acceptor in the catalytic mechanism. A Phosphotyrosine; by autocatalysis modification is found at tyrosine 620.

This sequence belongs to the protein kinase superfamily. CMGC Ser/Thr protein kinase family. MNB/DYRK subfamily. As to quaternary structure, part of a complex, consisting of pseudophosphatases egg-3, egg-4, egg-5 and kinase mbk-2. Interacts (via Tyr-618 and Tyr-620) with egg-4 (via tyrosine-protein phosphatase domain) and egg-5 (via tyrosine-protein phosphatase domain); mbk-2 tyrosine phosphorylation enhances the interaction. The interaction inhibits mbk-2 kinase activity and is required for mbk-2 oocyte cortex localization. Interacts (via N-terminus) with egg-3 (via tyrosine-protein phosphatase domain); the interaction does not affect mbk-2 kinase activity, is enhanced by mbk-2 tyrosine phosphorylation status and requires prior binding of mbk-2 to egg-4 and egg-5. The cofactor is Mg(2+). Autophosphorylated.

The protein localises to the cytoplasm. The protein resides in the cell cortex. It catalyses the reaction L-seryl-[protein] + ATP = O-phospho-L-seryl-[protein] + ADP + H(+). The catalysed reaction is L-threonyl-[protein] + ATP = O-phospho-L-threonyl-[protein] + ADP + H(+). The enzyme catalyses L-tyrosyl-[protein] + ATP = O-phospho-L-tyrosyl-[protein] + ADP + H(+). Its activity is regulated as follows. Activated during oocyte maturation by phosphorylation on Ser-361 by cdk-1. The pseudotyrosine phosphatases egg-4 and egg-5 sequester activated mbk-2 until the meiotic divisions and inhibit mbk-2 kinase activity directly, using a mixed-inhibition mechanism that does not involve tyrosine dephosphorylation. Its function is as follows. Required for oocyte-to-zygote transition in which it phosphorylates oocyte proteins, including mei-1, oma-1, oma-2, mex-5, and mex-6, modifying their activity and/or stability following meiosis. Through phosphorylation of P granule components including meg-1, promotes the disassembly of zygotic P granules in the anterior cytoplasm during zygote polarization, and thus plays a role in P granule distribution and segregation in early stage embryos following meiosis. Functions in both spindle positioning and in the posterior localization of cytoplasmic determinants, including pie-1, pos-1, and pgl-1, in early embryos. Involved in the asymmetric distribution of plk-1 at the 2-cell embryonic stage. In Caenorhabditis briggsae, this protein is Dual specificity tyrosine-phosphorylation-regulated kinase mbk-2.